The sequence spans 237 residues: Uridylate kinase (237 aa).

Residue 9-12 (KLSG) participates in ATP binding. Glycine 51 contacts UMP. 2 residues coordinate ATP: glycine 52 and arginine 56. UMP is bound by residues aspartate 71 and 132-139 (CGNPFFTT). ATP-binding residues include threonine 159, tyrosine 165, and aspartate 168.

This sequence belongs to the UMP kinase family. As to quaternary structure, homohexamer.

The protein resides in the cytoplasm. The enzyme catalyses UMP + ATP = UDP + ADP. Its pathway is pyrimidine metabolism; CTP biosynthesis via de novo pathway; UDP from UMP (UMPK route): step 1/1. With respect to regulation, inhibited by UTP. Its function is as follows. Catalyzes the reversible phosphorylation of UMP to UDP. The protein is Uridylate kinase of Prochlorococcus marinus (strain MIT 9313).